Here is a 69-residue protein sequence, read N- to C-terminus: Protein translocase subunit SecE (69 aa).

A helical transmembrane segment spans residues 43–63 (VAGAGILVIGFVGFLIYVLLT).

It belongs to the SecE/SEC61-gamma family. In terms of assembly, component of the Sec protein translocase complex. Heterotrimer consisting of SecY (alpha), SecG (beta) and SecE (gamma) subunits. The heterotrimers can form oligomers, although 1 heterotrimer is thought to be able to translocate proteins. Interacts with the ribosome. May interact with SecDF, and other proteins may be involved.

It localises to the cell membrane. Functionally, essential subunit of the Sec protein translocation channel SecYEG. Clamps together the 2 halves of SecY. May contact the channel plug during translocation. In Methanococcoides burtonii (strain DSM 6242 / NBRC 107633 / OCM 468 / ACE-M), this protein is Protein translocase subunit SecE.